Consider the following 429-residue polypeptide: Probable beta-1,3-galactosyl-O-glycosyl-glycoprotein beta-1,6-N-acetylglucosaminyltransferase 7 (429 aa).

Topologically, residues 1 to 8 (MSQLRATK) are cytoplasmic. The helical; Signal-anchor for type II membrane protein transmembrane segment at 9-25 (PGILVCAAIGIFVFLYL) threads the bilayer. At 26 to 429 (RNPTSEDPEE…ESHLNRRLNP (404 aa)) the chain is on the extracellular side. 4 disulfides stabilise this stretch: C53–C205, C139–C354, C160–C187, and C363–C394. The N-linked (GlcNAc...) asparagine glycan is linked to N87. N272 carries N-linked (GlcNAc...) asparagine glycosylation.

It belongs to the glycosyltransferase 14 family.

It is found in the golgi apparatus membrane. It functions in the pathway protein modification; protein glycosylation. In terms of biological role, probable glycosyltransferase. The chain is Probable beta-1,3-galactosyl-O-glycosyl-glycoprotein beta-1,6-N-acetylglucosaminyltransferase 7 from Sus scrofa (Pig).